Reading from the N-terminus, the 282-residue chain is tRNA uridine(34) hydroxylase (282 aa).

The region spanning 128-222 (EGRPVVMLDT…YFEEVGGSHY (95 aa)) is the Rhodanese domain. The active-site Cysteine persulfide intermediate is cysteine 182.

It belongs to the TrhO family.

The enzyme catalyses uridine(34) in tRNA + AH2 + O2 = 5-hydroxyuridine(34) in tRNA + A + H2O. Catalyzes oxygen-dependent 5-hydroxyuridine (ho5U) modification at position 34 in tRNAs. This Cupriavidus necator (strain ATCC 17699 / DSM 428 / KCTC 22496 / NCIMB 10442 / H16 / Stanier 337) (Ralstonia eutropha) protein is tRNA uridine(34) hydroxylase.